The chain runs to 244 residues: Carboxy-S-adenosyl-L-methionine synthase (244 aa).

Residues Tyr40, 65-67 (GCS), 90-91 (DN), Asn134, and Arg201 each bind S-adenosyl-L-methionine.

Belongs to the class I-like SAM-binding methyltransferase superfamily. Cx-SAM synthase family. Homodimer.

The enzyme catalyses prephenate + S-adenosyl-L-methionine = carboxy-S-adenosyl-L-methionine + 3-phenylpyruvate + H2O. Functionally, catalyzes the conversion of S-adenosyl-L-methionine (SAM) to carboxy-S-adenosyl-L-methionine (Cx-SAM). The sequence is that of Carboxy-S-adenosyl-L-methionine synthase from Citrifermentans bemidjiense (strain ATCC BAA-1014 / DSM 16622 / JCM 12645 / Bem) (Geobacter bemidjiensis).